Here is a 315-residue protein sequence, read N- to C-terminus: DNA-directed RNA polymerase subunit alpha (315 aa).

The segment at methionine 1–glutamine 229 is alpha N-terminal domain (alpha-NTD). The alpha C-terminal domain (alpha-CTD) stretch occupies residues glutamate 247–glutamate 315.

This sequence belongs to the RNA polymerase alpha chain family. Homodimer. The RNAP catalytic core consists of 2 alpha, 1 beta, 1 beta' and 1 omega subunit. When a sigma factor is associated with the core the holoenzyme is formed, which can initiate transcription.

The enzyme catalyses RNA(n) + a ribonucleoside 5'-triphosphate = RNA(n+1) + diphosphate. Functionally, DNA-dependent RNA polymerase catalyzes the transcription of DNA into RNA using the four ribonucleoside triphosphates as substrates. In Thermus thermophilus (strain ATCC BAA-163 / DSM 7039 / HB27), this protein is DNA-directed RNA polymerase subunit alpha.